A 144-amino-acid chain; its full sequence is Mediator of RNA polymerase II transcription subunit 10 (144 aa).

Belongs to the Mediator complex subunit 10 family. As to quaternary structure, component of the Mediator complex.

It is found in the cytoplasm. Its subcellular location is the nucleus. The protein resides in the nucleus envelope. Functionally, component of the Mediator complex, a coactivator involved in the regulated transcription of nearly all RNA polymerase II-dependent genes. Mediator functions as a bridge to convey information from gene-specific regulatory proteins to the basal RNA polymerase II transcription machinery. Mediator is recruited to promoters by direct interactions with regulatory proteins and serves as a scaffold for the assembly of a functional preinitiation complex with RNA polymerase II and the general transcription factors. In Schizosaccharomyces pombe (strain 972 / ATCC 24843) (Fission yeast), this protein is Mediator of RNA polymerase II transcription subunit 10 (med10).